The sequence spans 401 residues: Imidazolonepropionase (401 aa).

Residues H66 and H68 each coordinate Fe(3+). H66 and H68 together coordinate Zn(2+). Positions 75, 138, and 171 each coordinate 4-imidazolone-5-propanoate. Y138 is an N-formimidoyl-L-glutamate binding site. H236 lines the Fe(3+) pocket. H236 is a binding site for Zn(2+). Residue Q239 coordinates 4-imidazolone-5-propanoate. D311 is a Fe(3+) binding site. D311 is a binding site for Zn(2+). N313 and G315 together coordinate N-formimidoyl-L-glutamate. T316 contacts 4-imidazolone-5-propanoate.

It belongs to the metallo-dependent hydrolases superfamily. HutI family. Zn(2+) is required as a cofactor. It depends on Fe(3+) as a cofactor.

It localises to the cytoplasm. It catalyses the reaction 4-imidazolone-5-propanoate + H2O = N-formimidoyl-L-glutamate. It functions in the pathway amino-acid degradation; L-histidine degradation into L-glutamate; N-formimidoyl-L-glutamate from L-histidine: step 3/3. Its function is as follows. Catalyzes the hydrolytic cleavage of the carbon-nitrogen bond in imidazolone-5-propanoate to yield N-formimidoyl-L-glutamate. It is the third step in the universal histidine degradation pathway. This chain is Imidazolonepropionase, found in Acinetobacter baumannii (strain ACICU).